The chain runs to 503 residues: Lysine--tRNA ligase (503 aa).

Positions 414 and 421 each coordinate Mg(2+).

It belongs to the class-II aminoacyl-tRNA synthetase family. In terms of assembly, homodimer. The cofactor is Mg(2+).

It is found in the cytoplasm. It carries out the reaction tRNA(Lys) + L-lysine + ATP = L-lysyl-tRNA(Lys) + AMP + diphosphate. The chain is Lysine--tRNA ligase from Neisseria gonorrhoeae (strain NCCP11945).